A 247-amino-acid polypeptide reads, in one-letter code: ATP synthase subunit a, chloroplastic (247 aa).

5 helical membrane passes run 38–58 (QVLITSWVVIAILLGSAALAV), 95–115 (VPFIGTMFLFIFVSNWSGALL), 134–154 (INTTVALALLTSVAYFYAGLT), 199–219 (LVVVVLVSLVPSVVPIPVMFL), and 220–240 (GLFTSGIQALIFATLAAAYIG).

Belongs to the ATPase A chain family. F-type ATPases have 2 components, CF(1) - the catalytic core - and CF(0) - the membrane proton channel. CF(1) has five subunits: alpha(3), beta(3), gamma(1), delta(1), epsilon(1). CF(0) has four main subunits: a, b, b' and c.

The protein resides in the plastid. It is found in the chloroplast thylakoid membrane. Functionally, key component of the proton channel; it plays a direct role in the translocation of protons across the membrane. The protein is ATP synthase subunit a, chloroplastic of Helianthus annuus (Common sunflower).